Reading from the N-terminus, the 507-residue chain is Maturase K (507 aa).

Belongs to the intron maturase 2 family. MatK subfamily.

Its subcellular location is the plastid. The protein resides in the chloroplast. Its function is as follows. Usually encoded in the trnK tRNA gene intron. Probably assists in splicing its own and other chloroplast group II introns. This Craterostigma plantagineum (Blue gem) protein is Maturase K.